A 120-amino-acid chain; its full sequence is Large ribosomal subunit protein uL18 (120 aa).

The disordered stretch occupies residues 1–29; the sequence is MITKPNKNAGRKKRHAHVRRTLSGTPQRP. Basic residues predominate over residues 9 to 20; it reads AGRKKRHAHVRR.

This sequence belongs to the universal ribosomal protein uL18 family. As to quaternary structure, part of the 50S ribosomal subunit; part of the 5S rRNA/L5/L18/L25 subcomplex. Contacts the 5S and 23S rRNAs.

This is one of the proteins that bind and probably mediate the attachment of the 5S RNA into the large ribosomal subunit, where it forms part of the central protuberance. The sequence is that of Large ribosomal subunit protein uL18 from Shouchella clausii (strain KSM-K16) (Alkalihalobacillus clausii).